Consider the following 660-residue polypeptide: Methionine--tRNA ligase (660 aa).

Positions 15–25 match the 'HIGH' region motif; the sequence is YYPSDKLHIGH. Positions 311-315 match the 'KMSKS' region motif; sequence KMSKS. Position 314 (Lys-314) interacts with ATP. The tract at residues 535 to 554 is disordered; the sequence is LMGGSKKPEEAPKDEKEESD. Residues 540–550 are compositionally biased toward basic and acidic residues; it reads KKPEEAPKDEK. The region spanning 560–660 is the tRNA-binding domain; it reads DFSKVELRIA…GALPNGSLVK (101 aa).

Belongs to the class-I aminoacyl-tRNA synthetase family. MetG type 2B subfamily. Homodimer.

The protein resides in the cytoplasm. It carries out the reaction tRNA(Met) + L-methionine + ATP = L-methionyl-tRNA(Met) + AMP + diphosphate. Its function is as follows. Is required not only for elongation of protein synthesis but also for the initiation of all mRNA translation through initiator tRNA(fMet) aminoacylation. The sequence is that of Methionine--tRNA ligase (metG) from Halalkalibacterium halodurans (strain ATCC BAA-125 / DSM 18197 / FERM 7344 / JCM 9153 / C-125) (Bacillus halodurans).